Reading from the N-terminus, the 417-residue chain is Actin-like protein 7B (417 aa).

Positions 1–39 (MATKNNPSPKPMGTAQGDPGEAGTLPAPEAGIRDTGSTQ) are disordered. Ser-8 carries the phosphoserine modification.

This sequence belongs to the actin family.

Its subcellular location is the cytoplasm. The protein localises to the cytoskeleton. The protein is Actin-like protein 7B (Actl7b) of Rattus norvegicus (Rat).